A 193-amino-acid chain; its full sequence is Interferon lambda-3 (193 aa).

The signal sequence occupies residues 1–19 (MLLLLLPLLLAAVLTRTQA). Intrachain disulfides connect Cys35/Cys132, Cys69/Cys166, and Cys185/Cys192.

It belongs to the lambda interferon family.

It localises to the secreted. Its function is as follows. Cytokine with antiviral, antitumour and immunomodulatory activities. Plays a critical role in the antiviral host defense, predominantly in the epithelial tissues. Acts as a ligand for the heterodimeric class II cytokine receptor composed of IL10RB and IFNLR1, and receptor engagement leads to the activation of the JAK/STAT signaling pathway resulting in the expression of IFN-stimulated genes (ISG), which mediate the antiviral state. Has a restricted receptor distribution and therefore restricted targets: is primarily active in epithelial cells and this cell type-selective action is because of the epithelial cell-specific expression of its receptor IFNLR1. Seems not to be essential for early virus-activated host defense in vaginal infection, but plays an important role in Toll-like receptor (TLR)-induced antiviral defense. Plays a significant role in the antiviral immune defense in the intestinal epithelium. Exerts an immunomodulatory effect by up-regulating MHC class I antigen expression. This is Interferon lambda-3 (Ifnl3) from Mus musculus (Mouse).